The primary structure comprises 462 residues: Cysteine--tRNA ligase (462 aa).

Cys28 is a Zn(2+) binding site. The short motif at 30–40 is the 'HIGH' region element; the sequence is MTVYDYCHLGH. Residues Cys209, His234, and Glu238 each coordinate Zn(2+). The 'KMSKS' region motif lies at 266-270; the sequence is KMAKS. Lys269 serves as a coordination point for ATP.

Belongs to the class-I aminoacyl-tRNA synthetase family. Monomer. It depends on Zn(2+) as a cofactor.

The protein resides in the cytoplasm. It carries out the reaction tRNA(Cys) + L-cysteine + ATP = L-cysteinyl-tRNA(Cys) + AMP + diphosphate. In Alkalilimnicola ehrlichii (strain ATCC BAA-1101 / DSM 17681 / MLHE-1), this protein is Cysteine--tRNA ligase.